Here is a 291-residue protein sequence, read N- to C-terminus: F-box/kelch-repeat protein At5g38670 (291 aa).

In terms of domain architecture, F-box spans 5–51 (TNPNPSLPDDLILSCVARVSRLYYPALSLVSKSFRSLIASPELYKTR). 4 Kelch repeats span residues 46 to 91 (ELYK…VLDE), 92 to 140 (KIYV…RFDG), 142 to 187 (LHLV…WYTI), and 189 to 232 (KGDI…YGGK).

The polypeptide is F-box/kelch-repeat protein At5g38670 (Arabidopsis thaliana (Mouse-ear cress)).